The primary structure comprises 718 residues: Protein Hook homolog 3 (718 aa).

Met1 carries the N-acetylmethionine modification. The interval 1 to 164 is sufficient for interaction with microtubules; that stretch reads MFSVESLERA…QELMSKESPV (164 aa). Residues Ser3 and Ser6 each carry the phosphoserine modification. In terms of domain architecture, Calponin-homology (CH) spans 10-126; sequence AELCESLLTW…RMLQLILGCA (117 aa). 2 coiled-coil regions span residues 167-433 and 462-667; these read GNDA…VQAQ and EIRE…YIVS. Ser238 bears the Phosphoserine mark. The tract at residues 553-718 is required for association with Golgi; it reads EKLHEANNEL…PGHVQPATAR (166 aa). Positions 556–718 are required for interaction with MSR1; the sequence is HEANNELQKK…PGHVQPATAR (163 aa). A disordered region spans residues 682 to 718; that stretch reads EDRLASTGSGQSFLARQRQATSSRRSYPGHVQPATAR. Residues Ser693 and Ser707 each carry the phosphoserine modification. A compositionally biased stretch (low complexity) spans 696-707; sequence ARQRQATSSRRS.

The protein belongs to the hook family. In terms of assembly, self-associates. Component of the FTS/Hook/FHIP complex (FHF complex), composed of AKTIP/FTS, FHIP1B, and one or more members of the Hook family of proteins HOOK1, HOOK2, and HOOK3. May interact directly with AKTIP/FTS, HOOK1 and HOOK2. Associates with several subunits of the homotypic vesicular sorting complex (the HOPS complex) including VPS16 and VPS41; these interactions may be indirect. Interacts with MSR1, and this association is stimulated by ligand binding to MSR1. Interacts with microtubules. Part of a tripartite complex with dynein and dynactin, acts an adapter linking the dynein motor complex and dynactin. Interacts with dynein intermediate chain and dynactin (DCTN1). Interacts with CCDC181. Interacts with LRGUK. As to quaternary structure, (Microbial infection) Interacts with Salmonella typhimurium spiC.

It is found in the cytoplasm. The protein resides in the cytoskeleton. The protein localises to the golgi apparatus. Functionally, acts as an adapter protein linking the dynein motor complex to various cargos and converts dynein from a non-processive to a highly processive motor in the presence of dynactin. Facilitates the interaction between dynein and dynactin and activates dynein processivity (the ability to move along a microtubule for a long distance without falling off the track). Predominantly recruits 2 dyneins, which increases both the force and speed of the microtubule motor. Component of the FTS/Hook/FHIP complex (FHF complex). The FHF complex may function to promote vesicle trafficking and/or fusion via the homotypic vesicular protein sorting complex (the HOPS complex). May regulate clearance of endocytosed receptors such as MSR1. Participates in defining the architecture and localization of the Golgi complex. FHF complex promotes the distribution of AP-4 complex to the perinuclear area of the cell. Its function is as follows. (Microbial infection) May serve as a target for the spiC protein from Salmonella typhimurium, which inactivates it, leading to a strong alteration in cellular trafficking. This Homo sapiens (Human) protein is Protein Hook homolog 3.